A 159-amino-acid chain; its full sequence is Ribosomal RNA large subunit methyltransferase H (159 aa).

Residues leucine 76, glycine 107, and 126-131 each bind S-adenosyl-L-methionine; that span reads ISSLTL.

Belongs to the RNA methyltransferase RlmH family. As to quaternary structure, homodimer.

It localises to the cytoplasm. The enzyme catalyses pseudouridine(1915) in 23S rRNA + S-adenosyl-L-methionine = N(3)-methylpseudouridine(1915) in 23S rRNA + S-adenosyl-L-homocysteine + H(+). Its function is as follows. Specifically methylates the pseudouridine at position 1915 (m3Psi1915) in 23S rRNA. This chain is Ribosomal RNA large subunit methyltransferase H, found in Cupriavidus metallidurans (strain ATCC 43123 / DSM 2839 / NBRC 102507 / CH34) (Ralstonia metallidurans).